The primary structure comprises 484 residues: Aspartyl/glutamyl-tRNA(Asn/Gln) amidotransferase subunit B (484 aa).

Belongs to the GatB/GatE family. GatB subfamily. Heterotrimer of A, B and C subunits.

It catalyses the reaction L-glutamyl-tRNA(Gln) + L-glutamine + ATP + H2O = L-glutaminyl-tRNA(Gln) + L-glutamate + ADP + phosphate + H(+). The enzyme catalyses L-aspartyl-tRNA(Asn) + L-glutamine + ATP + H2O = L-asparaginyl-tRNA(Asn) + L-glutamate + ADP + phosphate + 2 H(+). Its function is as follows. Allows the formation of correctly charged Asn-tRNA(Asn) or Gln-tRNA(Gln) through the transamidation of misacylated Asp-tRNA(Asn) or Glu-tRNA(Gln) in organisms which lack either or both of asparaginyl-tRNA or glutaminyl-tRNA synthetases. The reaction takes place in the presence of glutamine and ATP through an activated phospho-Asp-tRNA(Asn) or phospho-Glu-tRNA(Gln). The polypeptide is Aspartyl/glutamyl-tRNA(Asn/Gln) amidotransferase subunit B (Bordetella pertussis (strain Tohama I / ATCC BAA-589 / NCTC 13251)).